Here is a 1802-residue protein sequence, read N- to C-terminus: Non-reducing polyketide synthase nscA (1802 aa).

Residues Asp27–His261 are N-terminal acylcarrier protein transacylase domain (SAT). Residues Ser396 to Asp829 form the Ketosynthase family 3 (KS3) domain. Residues Cys569, His704, and His747 each act as for beta-ketoacyl synthase activity in the active site. Residues Phe935–Arg1235 form a malonyl-CoA:ACP transacylase (MAT) domain region. A product template (PT) domain region spans residues Thr1322–Pro1641. Residues His1326–Ala1462 form an N-terminal hotdog fold region. A PKS/mFAS DH domain is found at His1326–Asp1636. Catalysis depends on His1358, which acts as the Proton acceptor; for dehydratase activity. The segment at Ala1490–Asp1636 is C-terminal hotdog fold. The active-site Proton donor; for dehydratase activity is the Asp1547. Residues Leu1699 to Ser1729 are disordered. Positions Thr1702–Pro1713 are enriched in low complexity. A Carrier domain is found at Pro1725–Cys1802. Ser1762 is modified (O-(pantetheine 4'-phosphoryl)serine).

The cofactor is pantetheine 4'-phosphate.

It functions in the pathway secondary metabolite biosynthesis. Functionally, non-reducing polyketide synthase; part of the gene cluster that mediates the biosynthesis of neosartoricin B, a prenylated anthracenone that probably exhibits T-cell antiproliferative activity, suggestive of a physiological role as an immunosuppressive agent. The non-reducing polyketide synthase nscA probably synthesizes and cyclizes the decaketide backbone. The hydrolase nscB then mediates the product release through hydrolysis followed by spontaneous decarboxylation. The prenyltransferase nscD catalyzes the addition of the dimethylallyl group to the aromatic C5. The FAD-dependent monooxygenase nscC is then responsible for the stereospecific hydroxylation at C2. Neosartoricin B can be converted into two additional compounds neosartoricins C and D. Neosartoricin C is a spirocyclic compound that is cyclized through the attack of C3 hydroxyl on C14, followed by dehydration. On the other hand, neosartoricin D is a further cyclized compound in which attack of C2 on C14 in neosartoricin C results in the formation of the acetal-containing dioxabicyclo-octanone ring. Both of these compounds are novel and possibly represent related metabolites of the gene cluster. The chain is Non-reducing polyketide synthase nscA from Trichophyton tonsurans (strain CBS 112818) (Scalp ringworm fungus).